The following is a 471-amino-acid chain: Trigger factor (471 aa).

A PPIase FKBP-type domain is found at 174-261; it reads GDVAVVSFEG…VKDLKTRELP (88 aa). A compositionally biased stretch (polar residues) spans 436–446; sequence ETLPKTKSLNG. A disordered region spans residues 436-471; that stretch reads ETLPKTKSLNGKPSTQGKTSQSKSKKTKTKVEKTTK. Over residues 447–457 the composition is skewed to low complexity; the sequence is KPSTQGKTSQS.

It belongs to the FKBP-type PPIase family. Tig subfamily.

It is found in the cytoplasm. The catalysed reaction is [protein]-peptidylproline (omega=180) = [protein]-peptidylproline (omega=0). Functionally, involved in protein export. Acts as a chaperone by maintaining the newly synthesized protein in an open conformation. Functions as a peptidyl-prolyl cis-trans isomerase. This chain is Trigger factor, found in Prochlorococcus marinus (strain MIT 9211).